A 155-amino-acid chain; its full sequence is Arginine repressor (155 aa).

Belongs to the ArgR family.

It localises to the cytoplasm. The protein operates within amino-acid biosynthesis; L-arginine biosynthesis [regulation]. Its function is as follows. Regulates arginine biosynthesis genes. In Mannheimia succiniciproducens (strain KCTC 0769BP / MBEL55E), this protein is Arginine repressor.